Here is a 364-residue protein sequence, read N- to C-terminus: Chorismate synthase (364 aa).

Residues R48 and R54 each coordinate NADP(+). FMN contacts are provided by residues 125–127, 238–239, G278, 293–297, and R319; these read RSS, NA, and KPTSS.

Belongs to the chorismate synthase family. In terms of assembly, homotetramer. The cofactor is FMNH2.

The enzyme catalyses 5-O-(1-carboxyvinyl)-3-phosphoshikimate = chorismate + phosphate. It participates in metabolic intermediate biosynthesis; chorismate biosynthesis; chorismate from D-erythrose 4-phosphate and phosphoenolpyruvate: step 7/7. Its function is as follows. Catalyzes the anti-1,4-elimination of the C-3 phosphate and the C-6 proR hydrogen from 5-enolpyruvylshikimate-3-phosphate (EPSP) to yield chorismate, which is the branch point compound that serves as the starting substrate for the three terminal pathways of aromatic amino acid biosynthesis. This reaction introduces a second double bond into the aromatic ring system. This is Chorismate synthase from Shewanella sediminis (strain HAW-EB3).